The sequence spans 319 residues: Cytochrome f (319 aa).

An N-terminal signal peptide occupies residues 1 to 35 (METRNIFSWIKEQITRSISVSLMIYIITRTAVSNA). The heme site is built by Y36, C56, C59, and H60. A helical membrane pass occupies residues 285–305 (VQGLLFFLASVILAQIFLVLK).

Belongs to the cytochrome f family. As to quaternary structure, the 4 large subunits of the cytochrome b6-f complex are cytochrome b6, subunit IV (17 kDa polypeptide, petD), cytochrome f and the Rieske protein, while the 4 small subunits are PetG, PetL, PetM and PetN. The complex functions as a dimer. Heme is required as a cofactor.

The protein localises to the plastid. It localises to the chloroplast thylakoid membrane. Component of the cytochrome b6-f complex, which mediates electron transfer between photosystem II (PSII) and photosystem I (PSI), cyclic electron flow around PSI, and state transitions. This is Cytochrome f from Coffea arabica (Arabian coffee).